We begin with the raw amino-acid sequence, 433 residues long: Leucine-rich repeat extensin-like protein 7 (433 aa).

A signal peptide spans 1 to 21 (MRIYQPTLLIFTTVVLLSISA). The N-linked (GlcNAc...) asparagine glycan is linked to Asn71. 9 LRR repeats span residues 98–122 (VKTV…LGLL), 123–145 (TDIA…GFSQ), 146–170 (LSLL…VIGL), 171–194 (PKLK…LFDK), 196–217 (LDAL…MGNS), 219–239 (VSVL…SFGK), 241–265 (GKTL…MGLL), 266–289 (QNVT…MGQM), and 290–313 (ENLE…LCSL). A glycan (N-linked (GlcNAc...) asparagine) is linked at Asn267. A glycan (N-linked (GlcNAc...) asparagine) is linked at Asn340. Positions 380-433 (FSPPPSQISPSSQPLAPAPSPTSPPLSTPPPARPCPPVYSPPPPPPLSLAPSMN) are disordered. Positions 381–433 (SPPPSQISPSSQPLAPAPSPTSPPLSTPPPARPCPPVYSPPPPPPLSLAPSMN) are contains the Ser-Pro(4) repeats. The span at 395 to 427 (APAPSPTSPPLSTPPPARPCPPVYSPPPPPPLS) shows a compositional bias: pro residues.

Hydroxylated on proline residues in the S-P-P-P-P repeat. In terms of processing, O-glycosylated on hydroxyprolines. Expressed in flowers and pollen.

The protein localises to the secreted. It localises to the cell wall. Functionally, modulates cell morphogenesis by regulating cell wall formation and assembly, and/or growth polarization. The chain is Leucine-rich repeat extensin-like protein 7 (LRX7) from Arabidopsis thaliana (Mouse-ear cress).